Reading from the N-terminus, the 264-residue chain is Thymidylate synthase (264 aa).

A dUMP-binding site is contributed by Arg-21. (6R)-5,10-methylene-5,6,7,8-tetrahydrofolate is bound at residue His-51. 126 to 127 (RR) contacts dUMP. Cys-146 serves as the catalytic Nucleophile. DUMP contacts are provided by residues 166–169 (RSCD), Asn-177, and 207–209 (HLY). Asp-169 contacts (6R)-5,10-methylene-5,6,7,8-tetrahydrofolate. Ala-263 contacts (6R)-5,10-methylene-5,6,7,8-tetrahydrofolate.

This sequence belongs to the thymidylate synthase family. Bacterial-type ThyA subfamily. As to quaternary structure, homodimer.

Its subcellular location is the cytoplasm. It carries out the reaction dUMP + (6R)-5,10-methylene-5,6,7,8-tetrahydrofolate = 7,8-dihydrofolate + dTMP. Its pathway is pyrimidine metabolism; dTTP biosynthesis. Catalyzes the reductive methylation of 2'-deoxyuridine-5'-monophosphate (dUMP) to 2'-deoxythymidine-5'-monophosphate (dTMP) while utilizing 5,10-methylenetetrahydrofolate (mTHF) as the methyl donor and reductant in the reaction, yielding dihydrofolate (DHF) as a by-product. This enzymatic reaction provides an intracellular de novo source of dTMP, an essential precursor for DNA biosynthesis. The polypeptide is Thymidylate synthase (Serratia proteamaculans (strain 568)).